The chain runs to 485 residues: Heat stress transcription factor A-1d (485 aa).

2 disordered regions span residues 1–34 (MDVS…SSNA) and 126–149 (RRKP…QNSS). The DNA-binding element occupies 35 to 129 (PPPFLSKTYD…LLQSITRRKP (95 aa)). Residues 136–146 (GHQRSQHSNGQ) are compositionally biased toward low complexity. A hydrophobic repeat HR-A/B region spans residues 152–218 (ACVEVGKFGL…QLMSFLAKAV (67 aa)). 2 disordered regions span residues 229 to 269 (QQQN…GQIV) and 436 to 461 (PVPD…DKTK). Positions 238–252 (NRRISDTSKKRRFKR) match the Bipartite nuclear localization signal motif. Over residues 441-455 (MDSTPVDNETEQEQN) the composition is skewed to polar residues. Positions 472 to 480 (LLSPETLDL) match the Nuclear export signal motif.

Belongs to the HSF family. Class A subfamily. Homotrimer. Interacts with HSP90-2. Exhibits temperature-dependent phosphorylation.

It is found in the cytoplasm. The protein resides in the nucleus. Its function is as follows. Transcriptional regulator that specifically binds DNA sequence 5'-AGAAnnTTCT-3' known as heat shock promoter elements (HSE). The chain is Heat stress transcription factor A-1d (HSFA1D) from Arabidopsis thaliana (Mouse-ear cress).